Here is a 237-residue protein sequence, read N- to C-terminus: Sugar fermentation stimulation protein homolog (237 aa).

It belongs to the SfsA family.

This Pseudomonas syringae pv. syringae (strain B728a) protein is Sugar fermentation stimulation protein homolog.